We begin with the raw amino-acid sequence, 292 residues long: [LysW]-aminoadipate kinase (292 aa).

Substrate is bound by residues Arg-89 and Asn-193.

The protein belongs to the acetylglutamate kinase family. LysZ subfamily.

It is found in the cytoplasm. It carries out the reaction [amino-group carrier protein]-C-terminal-N-(1,4-dicarboxybutan-1-yl)-L-glutamine + ATP = [amino-group carrier protein]-C-terminal-N-(1-carboxy-5-phosphooxy-5-oxopentan-1-yl)-L-glutamine + ADP. It participates in amino-acid biosynthesis; L-lysine biosynthesis via AAA pathway; L-lysine from L-alpha-aminoadipate (Thermus route): step 2/5. Catalyzes the phosphorylation of LysW-gamma-alpha-aminoadipate. This is [LysW]-aminoadipate kinase from Deinococcus radiodurans (strain ATCC 13939 / DSM 20539 / JCM 16871 / CCUG 27074 / LMG 4051 / NBRC 15346 / NCIMB 9279 / VKM B-1422 / R1).